The sequence spans 219 residues: Dynein light chain Tctex-type 4 (219 aa).

Residues 1–84 form a disordered region; the sequence is MAGRPVPAGR…RRPSLGPVPP (84 aa). Over residues 10–20 the composition is skewed to basic and acidic residues; sequence RQEEELAKDPG. Phosphoserine is present on serine 64.

It belongs to the dynein light chain Tctex-type family. Interacts with ENG/endoglin, TGFBR2 and TGFBR3. Interacts with PPP1CC.

It is found in the cell projection. Its subcellular location is the cilium. The protein localises to the flagellum. It localises to the cytoplasmic vesicle. The protein resides in the secretory vesicle. It is found in the acrosome. Its subcellular location is the cytoplasm. The protein localises to the cytoskeleton. It localises to the cilium axoneme. The protein resides in the nucleus. It is found in the microtubule organizing center. The polypeptide is Dynein light chain Tctex-type 4 (DYNLT4) (Sus scrofa (Pig)).